Consider the following 457-residue polypeptide: Dihydrolipoyl dehydrogenase (457 aa).

FAD contacts are provided by residues 32 to 40 (EKQYFGGVC), Lys-49, and Ala-113. Cysteines 40 and 45 form a disulfide. NAD(+)-binding positions include 178–182 (GGGVI), Val-235, and 262–265 (SIGR). FAD contacts are provided by Asp-303 and Ala-311. His-437 functions as the Proton acceptor in the catalytic mechanism.

The protein belongs to the class-I pyridine nucleotide-disulfide oxidoreductase family. In terms of assembly, homodimer. FAD serves as cofactor.

It localises to the cytoplasm. The catalysed reaction is N(6)-[(R)-dihydrolipoyl]-L-lysyl-[protein] + NAD(+) = N(6)-[(R)-lipoyl]-L-lysyl-[protein] + NADH + H(+). Its function is as follows. Lipoamide dehydrogenase is a component of the alpha-ketoacid dehydrogenase complexes. This is Dihydrolipoyl dehydrogenase (pdhD) from Mycoplasma genitalium (strain ATCC 33530 / DSM 19775 / NCTC 10195 / G37) (Mycoplasmoides genitalium).